The primary structure comprises 182 residues: NADH-quinone oxidoreductase subunit I (182 aa).

2 4Fe-4S ferredoxin-type domains span residues 52–82 (LTRDPDGEERCVACNLCAVACPVGCISLQKA) and 92–121 (EFFRINFSRCIFCGLCEEACPTTAIQLTPD). Cys62, Cys65, Cys68, Cys72, Cys101, Cys104, Cys107, and Cys111 together coordinate [4Fe-4S] cluster.

The protein belongs to the complex I 23 kDa subunit family. As to quaternary structure, NDH-1 is composed of 13 different subunits. Subunits NuoA, H, J, K, L, M, N constitute the membrane sector of the complex. [4Fe-4S] cluster is required as a cofactor.

Its subcellular location is the cell inner membrane. The catalysed reaction is a quinone + NADH + 5 H(+)(in) = a quinol + NAD(+) + 4 H(+)(out). In terms of biological role, NDH-1 shuttles electrons from NADH, via FMN and iron-sulfur (Fe-S) centers, to quinones in the respiratory chain. The immediate electron acceptor for the enzyme in this species is believed to be ubiquinone. Couples the redox reaction to proton translocation (for every two electrons transferred, four hydrogen ions are translocated across the cytoplasmic membrane), and thus conserves the redox energy in a proton gradient. The sequence is that of NADH-quinone oxidoreductase subunit I from Pseudomonas putida (strain ATCC 47054 / DSM 6125 / CFBP 8728 / NCIMB 11950 / KT2440).